A 236-amino-acid chain; its full sequence is H2HPP isomerase (236 aa).

2 consecutive Cupin type-1 domains span residues 40–106 (YVPP…AIDI) and 151–215 (NIPG…SKSV). A divalent metal cation-binding residues include His-50, His-52, Gln-56, His-91, His-162, His-164, Gln-168, and His-202. Substrate is bound at residue Tyr-223.

Monomer. The cofactor is Fe(2+). Co(2+) serves as cofactor.

The protein resides in the cytoplasm. It catalyses the reaction 3-[(4R)-4-hydroxycyclohexa-1,5-dien-1-yl]-2-oxopropanoate = 3-[(1E,4R)-4-hydroxycyclohex-2-en-1-ylidene]pyruvate. The protein operates within antibiotic biosynthesis; bacilysin biosynthesis. Part of the bacABCDEF operon responsible for the biosynthesis of the nonribosomally synthesized dipeptide antibiotic bacilysin, composed of L-alanine and L-anticapsin. Bacilysin is an irreversible inactivator of the glutaminase domain of glucosamine synthetase. BacB catalyzes the allylic isomerization of the endocyclic-delta(4),delta(8)-7R-dihydro-hydroxyphenylpyruvate (en-H2HPP) to generate a mixture of 3E,7R- and 3Z, 7R-olefins of the exocyclic-delta(3),delta(5)-dihydro-hydroxyphenylpyruvate (ex-H2HPP). The protein is H2HPP isomerase of Bacillus subtilis.